The following is a 509-amino-acid chain: MSNSILNLGSFACLLSLGSIVLWYTISAVLAWYPLRKIPAPSFLATFSYLWLAKTTYSGKQYWIQRDLHKKYGPLVRIGPTDIITDDPEIIKKISSARSSHRRGDWYLTGRFNPYYDNMFTMLEPGPHAKAKARTAAAYSGRDMPDLEVGVNAQLQTLIGLMRSKYASNTVKPHQPLLDLGQVSCFFTMDVITRLAFGEEFGYLKEETDQYGFLGEVRELWPRMSTSADTPWIRKFLFSPPFLKVLGPKPTDKTGFGALMAVAEHHVGKRFAPDAKKKEDMLGSFIRHGLNQQECEVEGLFMIVAGTESTASAIRSTLVHVMTCPRVYQKLKTEINLAVEEGKVSSPIKLEEAKLLPFLQAVIYEGIRMRPPLLGLFPKIVPDGGEEFHGMFIPAGTAICMNTSSLLRSTALFGDDAEVYRPERFMELEKSKRGEMERNVELAFGYGQYMCVGKTVAFMELNKSIFEILRAFDLQLLSPAKPCDVLSYGIFLESNMLVKVTESEGTEYK.

The signal sequence occupies residues 1-31 (MSNSILNLGSFACLLSLGSIVLWYTISAVLA). A glycan (N-linked (GlcNAc...) asparagine) is linked at N402. C451 contacts heme. N462 is a glycosylation site (N-linked (GlcNAc...) asparagine).

This sequence belongs to the cytochrome P450 family. Requires heme as cofactor.

The protein operates within hormone biosynthesis. Functionally, cytochrome P450 monooxygenase; part of the gene cluster that mediates the biosynthesis of abscisic acid (ABA), a phytohormone that acts antagonistically toward salicylic acid (SA), jasmonic acid (JA) and ethylene (ETH) signaling, to impede plant defense responses. The first step of the pathway catalyzes the reaction from farnesyl diphosphate to alpha-ionylideneethane performed by the alpha-ionylideneethane synthase aba3 via a three-step reaction mechanism involving 2 neutral intermediates, beta-farnesene and allofarnesene. The cytochrome P450 monooxygenase aba1 might then be involved in the conversion of alpha-ionylideneethane to alpha-ionylideneacetic acid. Alpha-ionylideneacetic acid is further converted to abscisic acid in 2 steps involving the cytochrome P450 monooxygenase aba2 and the short-chain dehydrogenase/reductase aba4, via the intermediates 1'-deoxy-ABA or 1',4'-trans-diol-ABA, depending on the order of action of these 2 enzymes. Aba2 is responsible for the hydroxylation of carbon atom C-1' and aba4 might be involved in the oxidation of the C-4' carbon atom. This Botryotinia fuckeliana (strain B05.10) (Noble rot fungus) protein is Cytochrome P450 monooxygenase aba1 (aba1).